The chain runs to 453 residues: tRNA modification GTPase MnmE (453 aa).

Residues Arg-22, Glu-79, and Lys-119 each contribute to the (6S)-5-formyl-5,6,7,8-tetrahydrofolate site. One can recognise a TrmE-type G domain in the interval 215–376 (GMKVVIAGRP…LQQHLKSLMG (162 aa)). Asn-225 serves as a coordination point for K(+). GTP contacts are provided by residues 225 to 230 (NAGKSS), 244 to 250 (TEIAGTT), 269 to 272 (DTAG), and 334 to 337 (NKAD). Residue Ser-229 coordinates Mg(2+). 3 residues coordinate K(+): Thr-244, Ile-246, and Thr-249. Thr-250 lines the Mg(2+) pocket. Lys-453 provides a ligand contact to (6S)-5-formyl-5,6,7,8-tetrahydrofolate.

It belongs to the TRAFAC class TrmE-Era-EngA-EngB-Septin-like GTPase superfamily. TrmE GTPase family. In terms of assembly, homodimer. Heterotetramer of two MnmE and two MnmG subunits. It depends on K(+) as a cofactor.

It localises to the cytoplasm. Functionally, exhibits a very high intrinsic GTPase hydrolysis rate. Involved in the addition of a carboxymethylaminomethyl (cmnm) group at the wobble position (U34) of certain tRNAs, forming tRNA-cmnm(5)s(2)U34. The chain is tRNA modification GTPase MnmE from Shewanella woodyi (strain ATCC 51908 / MS32).